The following is a 274-amino-acid chain: Homeobox-leucine zipper protein HAT9 (274 aa).

Residues 64–74 (SSHSGVSSFSS) show a composition bias toward low complexity. A disordered region spans residues 64 to 96 (SSHSGVSSFSSGRVVKRERDGGEESPEEEEMTE). A DNA-binding region (homeobox) is located at residues 110-169 (SARKKLRLTKQQSALLEESFKDHSTLNPKQKQVLARQLNLRPRQVEVWFQNRRARTKLKQ). The leucine-zipper stretch occupies residues 177-198 (LKKCCETLADENIRLQKEIQEL).

Belongs to the HD-ZIP homeobox family. Class II subfamily.

The protein localises to the nucleus. Probable transcription factor. This is Homeobox-leucine zipper protein HAT9 (HAT9) from Arabidopsis thaliana (Mouse-ear cress).